Consider the following 146-residue polypeptide: uncharacterized protein (146 aa).

This is an uncharacterized protein from Haemophilus influenzae (strain ATCC 51907 / DSM 11121 / KW20 / Rd).